The primary structure comprises 553 residues: MSLKSTTSSLTTNNHDKTINSVQSLVNGTGTVADHNPYDEVPYESYPYAITNPYHLSTLATLFGINAPEVENSKILELGCAAGGNLIPHAVLYPNAHFVGVDLSKVQIDEANKNVRALGLKNIEFHHCSITDIDDSFGKFDYIICHGVISWVPKIVRDKIFKVCNRNLSTNGIAYISYNTLPGWNMVRTIRDMMLYHSSSFTNIRDRIAQSRLLLEFVKDSLEHSKTPYAEVLKTEAGLLAKQTDHYLRHDHLEEENAQFYFHEFMNEARKHNLQYLADCNISTMYLGNMPPKVVEQLKAVNDIVRTEQYMDFITNRRFRTTLLCHNDLKINRNINNDDIKKFNIIFNVIPEKPLKEVDLNNATENLQFFLNGNKESNLSTTSPYMKAILYTFSENLNNPLSFKQVTSEANTKLNNTKLNEIKNELLNNAMKLVLQGYISITNQKHRSKPVLDKPKTTQMVIYQAKYTPSMWVTNLKHEPIGVNFFEKFALRYMDGRNDKKAIIEAILGHVEKGELTLSREGQKIENKEEIRKELESLFTPMIEKFCSNALLV.

This is an uncharacterized protein from Rickettsia prowazekii (strain Madrid E).